Consider the following 111-residue polypeptide: MSGQTFNPERLMQVILSPQISEKATFIGEKHNQIIFRVAPDATKPEVKAAVELIWKNQKVEVESVRISNVKGKEKRFGRFMGRRGGWKKAYISIKAGQEINFSEISQGEVK.

It belongs to the universal ribosomal protein uL23 family. As to quaternary structure, part of the 50S ribosomal subunit. Contacts protein L29, and trigger factor when it is bound to the ribosome.

One of the early assembly proteins it binds 23S rRNA. One of the proteins that surrounds the polypeptide exit tunnel on the outside of the ribosome. Forms the main docking site for trigger factor binding to the ribosome. The polypeptide is Large ribosomal subunit protein uL23 (Nitrosospira multiformis (strain ATCC 25196 / NCIMB 11849 / C 71)).